Reading from the N-terminus, the 590-residue chain is Oligoendopeptidase F homolog (590 aa).

His381 is a Zn(2+) binding site. Glu382 is a catalytic residue. 2 residues coordinate Zn(2+): His385 and His388.

It belongs to the peptidase M3B family. Zn(2+) is required as a cofactor.

This chain is Oligoendopeptidase F homolog (pepF), found in Borreliella burgdorferi (strain ATCC 35210 / DSM 4680 / CIP 102532 / B31) (Borrelia burgdorferi).